The primary structure comprises 256 residues: Pimeloyl-[acyl-carrier protein] methyl ester esterase (256 aa).

The AB hydrolase-1 domain occupies 15–242 (HLVLLHGWGL…AAHAPFISHP (228 aa)). Substrate is bound by residues tryptophan 22, 82–83 (SL), and 143–147 (FLALQ). Catalysis depends on serine 82, which acts as the Nucleophile. Catalysis depends on residues aspartate 207 and histidine 235. Histidine 235 lines the substrate pocket.

This sequence belongs to the AB hydrolase superfamily. Carboxylesterase BioH family. As to quaternary structure, monomer.

The protein resides in the cytoplasm. The catalysed reaction is 6-carboxyhexanoyl-[ACP] methyl ester + H2O = 6-carboxyhexanoyl-[ACP] + methanol + H(+). It participates in cofactor biosynthesis; biotin biosynthesis. The physiological role of BioH is to remove the methyl group introduced by BioC when the pimeloyl moiety is complete. It allows to synthesize pimeloyl-ACP via the fatty acid synthetic pathway through the hydrolysis of the ester bonds of pimeloyl-ACP esters. The sequence is that of Pimeloyl-[acyl-carrier protein] methyl ester esterase from Escherichia coli (strain 55989 / EAEC).